A 149-amino-acid chain; its full sequence is D-aminoacyl-tRNA deacylase (149 aa).

The short motif at 137-138 is the Gly-cisPro motif, important for rejection of L-amino acids element; the sequence is GP.

Belongs to the DTD family. Homodimer.

The protein resides in the cytoplasm. It carries out the reaction glycyl-tRNA(Ala) + H2O = tRNA(Ala) + glycine + H(+). The enzyme catalyses a D-aminoacyl-tRNA + H2O = a tRNA + a D-alpha-amino acid + H(+). Its function is as follows. An aminoacyl-tRNA editing enzyme that deacylates mischarged D-aminoacyl-tRNAs. Also deacylates mischarged glycyl-tRNA(Ala), protecting cells against glycine mischarging by AlaRS. Acts via tRNA-based rather than protein-based catalysis; rejects L-amino acids rather than detecting D-amino acids in the active site. By recycling D-aminoacyl-tRNA to D-amino acids and free tRNA molecules, this enzyme counteracts the toxicity associated with the formation of D-aminoacyl-tRNA entities in vivo and helps enforce protein L-homochirality. This chain is D-aminoacyl-tRNA deacylase, found in Caldicellulosiruptor saccharolyticus (strain ATCC 43494 / DSM 8903 / Tp8T 6331).